A 184-amino-acid polypeptide reads, in one-letter code: ATP-dependent protease subunit HslV (184 aa).

Threonine 11 is a catalytic residue. Residues alanine 165, cysteine 168, and threonine 171 each contribute to the Na(+) site.

This sequence belongs to the peptidase T1B family. HslV subfamily. As to quaternary structure, a double ring-shaped homohexamer of HslV is capped on each side by a ring-shaped HslU homohexamer. The assembly of the HslU/HslV complex is dependent on binding of ATP.

Its subcellular location is the cytoplasm. It catalyses the reaction ATP-dependent cleavage of peptide bonds with broad specificity.. Allosterically activated by HslU binding. Its function is as follows. Protease subunit of a proteasome-like degradation complex believed to be a general protein degrading machinery. The protein is ATP-dependent protease subunit HslV of Zymomonas mobilis subsp. mobilis (strain ATCC 31821 / ZM4 / CP4).